The chain runs to 1482 residues: Pregnancy zone protein (1482 aa).

An N-terminal signal peptide occupies residues 1–25 (MRKDRLLHLCLVLLLILLSASDSNS). N-linked (GlcNAc...) asparagine glycans are attached at residues asparagine 54, asparagine 69, asparagine 246, asparagine 392, and asparagine 406. The interval 685–735 (CSVIPSVSAGAVGQGYYGAGLGVVERPYVPQLGTYNVIPLNNEQSSGPVPE) is bait region. Asparagine 753, asparagine 875, and asparagine 932 each carry an N-linked (GlcNAc...) asparagine glycan. Positions 978–981 (CGEQ) form a cross-link, isoglutamyl cysteine thioester (Cys-Gln). Residues asparagine 997 and asparagine 1430 are each glycosylated (N-linked (GlcNAc...) asparagine).

The protein belongs to the protease inhibitor I39 (alpha-2-macroglobulin) family. Homotetramer, which consists of two pairs of disulfide-linked chains. As to expression, plasma. Prominent constituent of late-pregnancy sera.

It localises to the secreted. In terms of biological role, is able to inhibit all four classes of proteinases by a unique 'trapping' mechanism. This protein has a peptide stretch, called the 'bait region' which contains specific cleavage sites for different proteinases. When a proteinase cleaves the bait region, a conformational change is induced in the protein which traps the proteinase. The entrapped enzyme remains active against low molecular weight substrates (activity against high molecular weight substrates is greatly reduced). Following cleavage in the bait region a thioester bond is hydrolyzed and mediates the covalent binding of the protein to the proteinase. This chain is Pregnancy zone protein (PZP), found in Homo sapiens (Human).